An 82-amino-acid chain; its full sequence is UPF0180 protein BAA_1480 (82 aa).

The protein belongs to the UPF0180 family.

This is UPF0180 protein BAA_1480 from Bacillus anthracis (strain A0248).